The following is a 38-amino-acid chain: ITCGQVTSQVAGCLSYLQRGGAPAPXXXXGIRNLXXMA.

The protein belongs to the plant LTP family.

In terms of biological role, possesses potent antifungal activity against F.graminearum but not P.infestans. The protein is Antifungal protein 5 of Malva parviflora (Little mallow).